Consider the following 270-residue polypeptide: Putative pyruvate, phosphate dikinase regulatory protein (270 aa).

151–158 (GVSRTSKT) contributes to the ADP binding site.

It belongs to the pyruvate, phosphate/water dikinase regulatory protein family. PDRP subfamily.

The enzyme catalyses N(tele)-phospho-L-histidyl/L-threonyl-[pyruvate, phosphate dikinase] + ADP = N(tele)-phospho-L-histidyl/O-phospho-L-threonyl-[pyruvate, phosphate dikinase] + AMP + H(+). It carries out the reaction N(tele)-phospho-L-histidyl/O-phospho-L-threonyl-[pyruvate, phosphate dikinase] + phosphate + H(+) = N(tele)-phospho-L-histidyl/L-threonyl-[pyruvate, phosphate dikinase] + diphosphate. In terms of biological role, bifunctional serine/threonine kinase and phosphorylase involved in the regulation of the pyruvate, phosphate dikinase (PPDK) by catalyzing its phosphorylation/dephosphorylation. This is Putative pyruvate, phosphate dikinase regulatory protein (yqfL) from Bacillus subtilis (strain 168).